The following is a 414-amino-acid chain: Glucose-1-phosphate adenylyltransferase (414 aa).

Residues glycine 164, 181-182 (EK), and serine 199 each bind alpha-D-glucose 1-phosphate.

The protein belongs to the bacterial/plant glucose-1-phosphate adenylyltransferase family. As to quaternary structure, homotetramer.

The enzyme catalyses alpha-D-glucose 1-phosphate + ATP + H(+) = ADP-alpha-D-glucose + diphosphate. The protein operates within glycan biosynthesis; glycogen biosynthesis. In terms of biological role, involved in the biosynthesis of ADP-glucose, a building block required for the elongation reactions to produce glycogen. Catalyzes the reaction between ATP and alpha-D-glucose 1-phosphate (G1P) to produce pyrophosphate and ADP-Glc. This Kocuria rhizophila (strain ATCC 9341 / DSM 348 / NBRC 103217 / DC2201) protein is Glucose-1-phosphate adenylyltransferase.